The chain runs to 285 residues: Pantothenate synthetase (285 aa).

30–37 (MGFLHEGH) lines the ATP pocket. Catalysis depends on H37, which acts as the Proton donor. A (R)-pantoate-binding site is contributed by Q61. Q61 is a binding site for beta-alanine. Residue 147–150 (GQKD) participates in ATP binding. Q153 serves as a coordination point for (R)-pantoate. ATP contacts are provided by residues V176 and 184–187 (KSSR).

It belongs to the pantothenate synthetase family. In terms of assembly, homodimer.

The protein resides in the cytoplasm. It catalyses the reaction (R)-pantoate + beta-alanine + ATP = (R)-pantothenate + AMP + diphosphate + H(+). It functions in the pathway cofactor biosynthesis; (R)-pantothenate biosynthesis; (R)-pantothenate from (R)-pantoate and beta-alanine: step 1/1. In terms of biological role, catalyzes the condensation of pantoate with beta-alanine in an ATP-dependent reaction via a pantoyl-adenylate intermediate. The sequence is that of Pantothenate synthetase from Listeria monocytogenes serotype 4b (strain F2365).